Consider the following 424-residue polypeptide: MLDIKLIRKAPEECETRLRKKDPLISLQPILDLDKEIRHLKTETEALQSQRKLLSNQIHKAKAQGEDVSSMMDNVERISQDLAKLEPLLEQKESTLQDMLVRLPNYPDEDVPVCPDKTGNQVIKQVGALPTFSFTPKHHVELNQKLQILDFKLPAKTSGSGWPAYKNQGVCLEWALLTYLLNKQREHGFQLWLPPLLVKHEILFGSGQIPKFDGQYYRVEDGEQSLYLIPTAEVVLNGFHSQEIFSEKDLPIYYAAFTPCFRREAGAAGAHERGLVRVHQFHKVEMFAFTTPDQADQAYEKMLAVVEDILTELQLPYRLSLLSTGDMSFTASKTIDAEVWLPGQQSYYEVSSISQCTDFQSRRSETRYKDNRGKMHFVHTLNGSGLATPRLFVAILENNQQEDGSVIIPEVLRPYLENQEVLLP.

Residue 231–233 participates in L-serine binding; the sequence is TAE. Residues 262–264 and Val-278 each bind ATP; that span reads RRE. Position 285 (Glu-285) interacts with L-serine. Position 349–352 (349–352) interacts with ATP; the sequence is EVSS. Ser-384 contacts L-serine.

Belongs to the class-II aminoacyl-tRNA synthetase family. Type-1 seryl-tRNA synthetase subfamily. Homodimer. The tRNA molecule binds across the dimer.

It localises to the cytoplasm. The enzyme catalyses tRNA(Ser) + L-serine + ATP = L-seryl-tRNA(Ser) + AMP + diphosphate + H(+). It carries out the reaction tRNA(Sec) + L-serine + ATP = L-seryl-tRNA(Sec) + AMP + diphosphate + H(+). It participates in aminoacyl-tRNA biosynthesis; selenocysteinyl-tRNA(Sec) biosynthesis; L-seryl-tRNA(Sec) from L-serine and tRNA(Sec): step 1/1. In terms of biological role, catalyzes the attachment of serine to tRNA(Ser). Is also able to aminoacylate tRNA(Sec) with serine, to form the misacylated tRNA L-seryl-tRNA(Sec), which will be further converted into selenocysteinyl-tRNA(Sec). The chain is Serine--tRNA ligase from Chlamydia abortus (strain DSM 27085 / S26/3) (Chlamydophila abortus).